The chain runs to 128 residues: Sulfurtransferase TusD (128 aa).

Cysteine 78 serves as the catalytic Cysteine persulfide intermediate.

It belongs to the DsrE/TusD family. In terms of assembly, heterohexamer, formed by a dimer of trimers. The hexameric TusBCD complex contains 2 copies each of TusB, TusC and TusD. The TusBCD complex interacts with TusE.

The protein localises to the cytoplasm. Its function is as follows. Part of a sulfur-relay system required for 2-thiolation of 5-methylaminomethyl-2-thiouridine (mnm(5)s(2)U) at tRNA wobble positions. Accepts sulfur from TusA and transfers it in turn to TusE. This chain is Sulfurtransferase TusD, found in Shigella dysenteriae serotype 1 (strain Sd197).